A 97-amino-acid chain; its full sequence is Co-chaperonin GroES (97 aa).

Belongs to the GroES chaperonin family. In terms of assembly, heptamer of 7 subunits arranged in a ring. Interacts with the chaperonin GroEL.

It is found in the cytoplasm. Functionally, together with the chaperonin GroEL, plays an essential role in assisting protein folding. The GroEL-GroES system forms a nano-cage that allows encapsulation of the non-native substrate proteins and provides a physical environment optimized to promote and accelerate protein folding. GroES binds to the apical surface of the GroEL ring, thereby capping the opening of the GroEL channel. This is Co-chaperonin GroES from Photorhabdus laumondii subsp. laumondii (strain DSM 15139 / CIP 105565 / TT01) (Photorhabdus luminescens subsp. laumondii).